Consider the following 341-residue polypeptide: Anthranilate phosphoribosyltransferase (341 aa).

5-phospho-alpha-D-ribose 1-diphosphate contacts are provided by residues glycine 79, 82 to 83, threonine 87, 89 to 92, 107 to 115, and alanine 119; these read GD, NIST, and KHGNRAASS. Glycine 79 provides a ligand contact to anthranilate. Mg(2+) is bound at residue serine 91. Asparagine 110 provides a ligand contact to anthranilate. Anthranilate is bound at residue arginine 165. 2 residues coordinate Mg(2+): aspartate 224 and glutamate 225.

The protein belongs to the anthranilate phosphoribosyltransferase family. As to quaternary structure, homodimer. Mg(2+) is required as a cofactor.

The catalysed reaction is N-(5-phospho-beta-D-ribosyl)anthranilate + diphosphate = 5-phospho-alpha-D-ribose 1-diphosphate + anthranilate. It functions in the pathway amino-acid biosynthesis; L-tryptophan biosynthesis; L-tryptophan from chorismate: step 2/5. Catalyzes the transfer of the phosphoribosyl group of 5-phosphorylribose-1-pyrophosphate (PRPP) to anthranilate to yield N-(5'-phosphoribosyl)-anthranilate (PRA). In Lacticaseibacillus casei (strain BL23) (Lactobacillus casei), this protein is Anthranilate phosphoribosyltransferase.